A 1218-amino-acid chain; its full sequence is Coatomer subunit alpha-1 (1218 aa).

WD repeat units lie at residues 7–48, 49–88, 91–132, 133–172, 202–241, 246–285, 288–326, 363–404, and 450–489; these read TKSN…DRFD, EHDG…CLFT, GHLD…AVLT, GHNH…KKTV, GHDR…AWEV, GHMN…GIQT, REHD…PAFS, SLNQ…AGRA, and PLPI…GELQ. The disordered stretch occupies residues 857–882; it reads NGGDGFDAEEGEANEEDGEEGGWDLE. The segment covering 862–882 has biased composition (acidic residues); it reads FDAEEGEANEEDGEEGGWDLE.

Oligomeric complex that consists of at least the alpha, beta, beta', gamma, delta, epsilon and zeta subunits.

Its subcellular location is the cytoplasm. The protein resides in the golgi apparatus membrane. It localises to the cytoplasmic vesicle. It is found in the COPI-coated vesicle membrane. Functionally, the coatomer is a cytosolic protein complex that binds to dilysine motifs and reversibly associates with Golgi non-clathrin-coated vesicles, which further mediate biosynthetic protein transport from the ER, via the Golgi up to the trans Golgi network. Coatomer complex is required for budding from Golgi membranes, and is essential for the retrograde Golgi-to-ER transport of dilysine-tagged proteins. This Oryza sativa subsp. japonica (Rice) protein is Coatomer subunit alpha-1.